The sequence spans 1531 residues: Multidrug resistance-associated protein 1 (1531 aa).

Residues 1–33 (MALRGFCSADGSDPLWDWNVTWNTSNPDFTKCF) are Extracellular-facing. N-linked (GlcNAc...) asparagine glycosylation is found at Asn-19 and Asn-23. The helical transmembrane segment at 34-54 (QNTVLVWVPCFYLWACFPFYF) threads the bilayer. The Cytoplasmic segment spans residues 55–74 (LYLSRHDRGYIQMTPLNKTK). Residues 75-95 (TALGFLLWIVCWADLFYSFWE) traverse the membrane as a helical segment. The Extracellular segment spans residues 96-100 (RSRGI). A helical transmembrane segment spans residues 101-121 (FLAPVFLVSPTLLGITMLLAT). Topologically, residues 122 to 133 (FLIQLERRKGVQ) are cytoplasmic. The chain crosses the membrane as a helical span at residues 134-154 (SSGIMLTFWLVALVCALAILR). Residues 155–172 (SKIMTALKEDAQVDLFRD) are Extracellular-facing. The helical transmembrane segment at 173–193 (ITFYVYFSLLLIQLVLSCFSD) threads the bilayer. Topologically, residues 194-316 (RSPLFSETIH…KEWNPSLFKV (123 aa)) are cytoplasmic. Position 277 is a phosphotyrosine (Tyr-277). Phosphoserine is present on Ser-289. The chain crosses the membrane as a helical span at residues 317 to 337 (LYKTFGPYFLMSFFFKAIHDL). The ABC transmembrane type-1 1 domain occupies 325–608 (FLMSFFFKAI…LPMVISSIVQ (284 aa)). Residues 338 to 363 (MMFSGPQILKLLIKFVNDTKAPDWQG) lie on the Extracellular side of the membrane. The chain crosses the membrane as a helical span at residues 364-384 (YFYTVLLFVTACLQTLVLHQY). Over 385 to 440 (FHICFVSGMRIKTAVIGAVYRKALVITNSARKSSTVGEIVNLMSVDAQRFMDLATY) the chain is Cytoplasmic. Residues 441–461 (INMIWSAPLQVILALYLLWLN) traverse the membrane as a helical segment. Residues 462–464 (LGP) lie on the Extracellular side of the membrane. The chain crosses the membrane as a helical span at residues 465–485 (SVLAGVAVMVLMVPVNAVMAM). Topologically, residues 486–547 (KTKTYQVAHM…VLKKSAYLSA (62 aa)) are cytoplasmic. At Lys-503 the chain carries N6-succinyllysine. The chain crosses the membrane as a helical span at residues 548–568 (VGTFTWVCTPFLVALCTFAVY). The Extracellular portion of the chain corresponds to 569 to 590 (VTIDENNILDAQTAFVSLALFN). Residues 591–611 (ILRFPLNILPMVISSIVQASV) form a helical membrane-spanning segment. The Cytoplasmic portion of the chain corresponds to 612-967 (SLKRLRIFLS…VKLSVYWDYM (356 aa)). The ABC transporter 1 domain occupies 644 to 868 (ITVRNATFTW…DGAFAEFLRT (225 aa)). ATP-binding positions include Trp-653, 678–685 (GQVGCGKS), and Gln-713. 3 positions are modified to phosphoserine: Ser-905, Ser-915, and Ser-930. Residues 968 to 988 (KAIGLFISFLSIFLFMCNHVS) traverse the membrane as a helical segment. In terms of domain architecture, ABC transmembrane type-1 2 spans 975–1256 (SFLSIFLFMC…LVRMSSEMET (282 aa)). At 989–1025 (ALASNYWLSLWTDDPIVNGTQEHTKVRLSVYGALGIS) the chain is on the extracellular side. N-linked (GlcNAc...) asparagine glycosylation is present at Asn-1006. A helical membrane pass occupies residues 1026–1046 (QGIAVFGYSMAVSIGGILASR). The Cytoplasmic portion of the chain corresponds to 1047–1089 (CLHVDLLHSILRSPMSFFERTPSGNLVNRFSKELDTVDSMIPE). A helical membrane pass occupies residues 1090–1110 (VIKMFMGSLFNVIGACIVILL). Position 1111 (Ala-1111) is a topological domain, extracellular. A helical membrane pass occupies residues 1112 to 1132 (TPIAAIIIPPLGLIYFFVQRF). Residues 1133-1203 (YVASSRQLKR…VANRWLAVRL (71 aa)) are Cytoplasmic-facing. A helical transmembrane segment spans residues 1204 to 1224 (ECVGNCIVLFAALFAVISRHS). The Extracellular portion of the chain corresponds to 1225 to 1226 (LS). Residues 1227–1247 (AGLVGLSVSYSLQVTTYLNWL) traverse the membrane as a helical segment. The Cytoplasmic segment spans residues 1248–1531 (VRMSSEMETN…YSMAKDAGLV (284 aa)). The region spanning 1293–1527 (VEFRNYCLRY…RGLFYSMAKD (235 aa)) is the ABC transporter 2 domain. An ATP-binding site is contributed by 1327-1334 (GRTGAGKS).

It belongs to the ABC transporter superfamily. ABCC family. Conjugate transporter (TC 3.A.1.208) subfamily. In terms of assembly, (Microbial infection) Interacts with human cytomegalovirus protein UL138; this interaction mediates MRP1 degradation via the lysosome. Lung, testis and peripheral blood mononuclear cells.

Its subcellular location is the cell membrane. It localises to the basolateral cell membrane. The enzyme catalyses ATP + H2O + xenobioticSide 1 = ADP + phosphate + xenobioticSide 2.. It catalyses the reaction an S-substituted glutathione(in) + ATP + H2O = an S-substituted glutathione(out) + ADP + phosphate + H(+). The catalysed reaction is sphing-4-enine 1-phosphate(in) + ATP + H2O = sphing-4-enine 1-phosphate(out) + ADP + phosphate + H(+). It carries out the reaction leukotriene C4(in) + ATP + H2O = leukotriene C4(out) + ADP + phosphate + H(+). The enzyme catalyses 17beta-estradiol 17-O-(beta-D-glucuronate)(in) + ATP + H2O = 17beta-estradiol 17-O-(beta-D-glucuronate)(out) + ADP + phosphate + H(+). It catalyses the reaction daunorubicin(in) + ATP + H2O = daunorubicin(out) + ADP + phosphate + H(+). The catalysed reaction is vincristine(in) + ATP + H2O = vincristine(out) + ADP + phosphate + H(+). It carries out the reaction 2',3'-cGAMP(in) + ATP + H2O = 2',3'-cGAMP(out) + ADP + phosphate + H(+). The enzyme catalyses S-[(2E,6E,10E)-geranylgeranyl]-L-glutathione(in) + ATP + H2O = S-[(2E,6E,10E)-geranylgeranyl]-L-glutathione(out) + ADP + phosphate + H(+). It catalyses the reaction prostaglandin A2-S-(R)-glutathione(in) + ATP + H2O = prostaglandin A2-S-(R)-glutathione(out) + ADP + phosphate + H(+). The catalysed reaction is prostaglandin A2-S-(S)-glutathione(in) + ATP + H2O = prostaglandin A2-S-(S)-glutathione(out) + ADP + phosphate + H(+). With respect to regulation, MK 571 inhibits sphingosine 1-phosphate and leukotriene C4 export. In terms of biological role, mediates export of organic anions and drugs from the cytoplasm. Mediates ATP-dependent transport of glutathione and glutathione conjugates, leukotriene C4, estradiol-17-beta-o-glucuronide, methotrexate, antiviral drugs and other xenobiotics. Confers resistance to anticancer drugs by decreasing accumulation of drug in cells, and by mediating ATP- and GSH-dependent drug export. Hydrolyzes ATP with low efficiency. Catalyzes the export of sphingosine 1-phosphate from mast cells independently of their degranulation. Participates in inflammatory response by allowing export of leukotriene C4 from leukotriene C4-synthesizing cells. Mediates ATP-dependent, GSH-independent cyclic GMP-AMP (cGAMP) export. Thus, by limiting intracellular cGAMP concentrations negatively regulates the cGAS-STING pathway. Exports S-geranylgeranyl-glutathione (GGG) in lymphoid cells and stromal compartments of lymphoid organs. ABCC1 (via extracellular transport) with GGT5 (via GGG catabolism) establish GGG gradients within lymphoid tissues to position P2RY8-positive lymphocytes at germinal centers in lymphoid follicles and restrict their chemotactic transmigration from blood vessels to the bone marrow parenchyma. Mediates basolateral export of GSH-conjugated R- and S-prostaglandin A2 diastereomers in polarized epithelial cells. This chain is Multidrug resistance-associated protein 1, found in Homo sapiens (Human).